The following is a 127-amino-acid chain: Fluoride-specific ion channel FluC (127 aa).

4 consecutive transmembrane segments (helical) span residues 4-24 (LDYL…YLVS), 39-59 (GTII…FAAI), 68-88 (AILF…TFTY), and 102-122 (VAYA…GMIL). Na(+) is bound by residues glycine 78 and threonine 81.

The protein belongs to the fluoride channel Fluc/FEX (TC 1.A.43) family.

It localises to the cell inner membrane. The catalysed reaction is fluoride(in) = fluoride(out). Na(+) is not transported, but it plays an essential structural role and its presence is essential for fluoride channel function. Fluoride-specific ion channel. Important for reducing fluoride concentration in the cell, thus reducing its toxicity. The chain is Fluoride-specific ion channel FluC from Thermotoga petrophila (strain ATCC BAA-488 / DSM 13995 / JCM 10881 / RKU-1).